A 244-amino-acid polypeptide reads, in one-letter code: Ribosomal RNA large subunit methyltransferase E (244 aa).

A disordered region spans residues 1-23 (MATGGKKSAGRTTGSGPAGGSRN). S-adenosyl-L-methionine-binding residues include glycine 91, tryptophan 93, aspartate 116, aspartate 132, and aspartate 156. Residue lysine 196 is the Proton acceptor of the active site.

Belongs to the class I-like SAM-binding methyltransferase superfamily. RNA methyltransferase RlmE family.

It localises to the cytoplasm. It catalyses the reaction uridine(2552) in 23S rRNA + S-adenosyl-L-methionine = 2'-O-methyluridine(2552) in 23S rRNA + S-adenosyl-L-homocysteine + H(+). In terms of biological role, specifically methylates the uridine in position 2552 of 23S rRNA at the 2'-O position of the ribose in the fully assembled 50S ribosomal subunit. In Paramagnetospirillum magneticum (strain ATCC 700264 / AMB-1) (Magnetospirillum magneticum), this protein is Ribosomal RNA large subunit methyltransferase E.